The primary structure comprises 477 residues: MAPPPSLAPDRGGGEPDDALRLRARAAAAAGDAPAPQQQQEQRHQEQQQQLLWYRASAPAHRRVRESPLSSDAIFRQSHAGLLNLCIVVLVAVNSRLIIENLMKYGLLIRAGFWFSGTSLADWPLLMCCLTLPTFPLAALMVEKLAQRKLISKHVVILLHIVITTSVLVYPVVVILKCDSAVLSGFVLMFLASIIWLKLVSFAHTNYDIRMLSKSIEKGVTHDISIDPENIKWPTFKRLSYFMLAPTLCYQPSYPRTTYIRKGWVVRQLIKCLVFTGLMGFIIEQYINPIVKNSKHPLKGNFLNAIERVLKLSVPTLYVWLCMFYCFFHLWLNILAELLCFGDREFYKDWWNAKTVEEYWRMWNMPVHKWVIRHIYFPCIRNGFSKGVAILISFLVSAAFHELCVAVPCHIFKFWAFIGIMFQIPLVFLTKYLQDKFNNTMVGNMIFWFFFSILGQPMCVLLYYHDVMNRQQAQTNR.

The interval M1–Q48 is disordered. Residues G12–R21 are compositionally biased toward basic and acidic residues. Residues R25–Q40 show a composition bias toward low complexity. Helical transmembrane passes span H79–I99, W123–E143, V155–I175, V182–F202, N230–Y250, G263–I283, and V319–L339. The FYXDWWN motif motif lies at F346 to N352. Helical transmembrane passes span G387–V407, C409–L429, and V442–L462. H401 is an active-site residue.

It belongs to the membrane-bound acyltransferase family. Sterol o-acyltransferase subfamily.

It is found in the endoplasmic reticulum membrane. It carries out the reaction an acyl-CoA + a 1,2-diacyl-sn-glycerol = a triacyl-sn-glycerol + CoA. Its pathway is glycerolipid metabolism; triacylglycerol biosynthesis. Its function is as follows. Involved in triacylglycerol (TAG) synthesis. Catalyzes the acylation of the sn-3 hydroxy group of sn-1,2-diacylglycerol using acyl-CoA. The sequence is that of Diacylglycerol O-acyltransferase 1-2 from Oryza sativa subsp. japonica (Rice).